The primary structure comprises 148 residues: Homoprotocatechuate degradative operon repressor (148 aa).

Residues 2–134 (HDSLTIALLQ…LTHLLEEFIA (133 aa)) enclose the HTH marR-type domain.

Its function is as follows. Repressor for the homoprotocatechuate catabolic pathway hpc operon. This is Homoprotocatechuate degradative operon repressor (hpcR) from Escherichia coli.